The following is a 676-amino-acid chain: Electrogenic aspartate/glutamate antiporter SLC25A13, mitochondrial (676 aa).

A2 carries the post-translational modification N-acetylalanine. The interval A2–P295 is regulatory N-terminal domain. Residues A2 to R332 lie on the Mitochondrial intermembrane side of the membrane. K18 carries the N6-acetyllysine modification. 4 consecutive EF-hand domains span residues S51–C86, A87–H122, Q123–E157, and I158–H193. Ca(2+)-binding residues include D66, T68, D70, L72, and E77. The linker loop domain stretch occupies residues L296–Q311. Residues F322–G613 are carrier domain. Solcar repeat units follow at residues A327–K419, V427–S511, and V519–W607. Residues F333 to I350 traverse the membrane as a helical segment. The Mitochondrial matrix segment spans residues D351–R393. N6-acetyllysine is present on residues K354 and K373. The helical transmembrane segment at G394–N413 threads the bilayer. Topologically, residues D414–G436 are mitochondrial intermembrane. Residues G437–L450 form a helical membrane-spanning segment. Over E451–K485 the chain is Mitochondrial matrix. K454 is subject to N6-methyllysine. K485 bears the N6-acetyllysine; alternate mark. K485 carries the N6-succinyllysine; alternate modification. The chain crosses the membrane as a helical span at residues G486–Y505. Residues A506 to L524 are Mitochondrial intermembrane-facing. Residues L525 to A542 traverse the membrane as a helical segment. Residues D543–K581 are Mitochondrial matrix-facing. K581 is modified (N6-succinyllysine). The chain crosses the membrane as a helical span at residues G582 to Y601. The Mitochondrial intermembrane portion of the chain corresponds to E602–S676. Residues G614 to S676 form a C-terminal domain region. Position 663 is an N6-acetyllysine (K663). S667 bears the Phosphoserine mark.

This sequence belongs to the mitochondrial carrier (TC 2.A.29) family. Homodimer (via N-terminus). At 10.5 dpc, expressed in branchial arches, a well as in the limb and tail buds. At 13.5 dpc expression is predominant in epithelial structures and the forebrain, kidney and liver. Expression in liver is maintained into adulthood.

It localises to the mitochondrion inner membrane. It catalyses the reaction L-aspartate(in) + L-glutamate(out) + H(+)(out) = L-aspartate(out) + L-glutamate(in) + H(+)(in). The catalysed reaction is 3-sulfino-L-alanine(out) + L-glutamate(in) + H(+)(in) = 3-sulfino-L-alanine(in) + L-glutamate(out) + H(+)(out). It carries out the reaction 3-sulfino-L-alanine(out) + L-aspartate(in) = 3-sulfino-L-alanine(in) + L-aspartate(out). In terms of biological role, mitochondrial electrogenic aspartate/glutamate antiporter that favors efflux of aspartate and entry of glutamate and proton within the mitochondria as part of the malate-aspartate shuttle. Also mediates the uptake of L-cysteinesulfinate (3-sulfino-L-alanine) by mitochondria in exchange of L-glutamate and proton. Can also exchange L-cysteinesulfinate with aspartate in their anionic form without any proton translocation. Lacks transport activity towards gamma-aminobutyric acid (GABA). The polypeptide is Electrogenic aspartate/glutamate antiporter SLC25A13, mitochondrial (Mus musculus (Mouse)).